Here is a 216-residue protein sequence, read N- to C-terminus: Large ribosomal subunit protein uL1y (216 aa).

The protein belongs to the universal ribosomal protein uL1 family. As to quaternary structure, interacts with the GTPase NUG2.

In Arabidopsis thaliana (Mouse-ear cress), this protein is Large ribosomal subunit protein uL1y (RPL10AB).